A 747-amino-acid polypeptide reads, in one-letter code: Polyribonucleotide nucleotidyltransferase (747 aa).

Mg(2+) is bound by residues aspartate 493 and aspartate 499. A KH domain is found at 560-619 (PRIITLQINPEKIGALIGPGGKTVRGITEATGAQIDIEEDGRVYISTPDAAAAQQAVAMV). The S1 motif domain occupies 629–698 (GDIFLGKVVR…GTGKVSLSRR (70 aa)). Residues 705-747 (TAEDRRAAGAGRGLRDGGGRSGGSDRGGDRGPRGDDRQRPRRR) form a disordered region. 2 stretches are compositionally biased toward basic and acidic residues: residues 706–722 (AEDR…RDGG) and 730–747 (RGGD…PRRR).

Belongs to the polyribonucleotide nucleotidyltransferase family. Mg(2+) serves as cofactor.

It is found in the cytoplasm. It carries out the reaction RNA(n+1) + phosphate = RNA(n) + a ribonucleoside 5'-diphosphate. In terms of biological role, involved in mRNA degradation. Catalyzes the phosphorolysis of single-stranded polyribonucleotides processively in the 3'- to 5'-direction. This is Polyribonucleotide nucleotidyltransferase from Roseiflexus sp. (strain RS-1).